A 90-amino-acid chain; its full sequence is Probable Fe(2+)-trafficking protein (90 aa).

The protein belongs to the Fe(2+)-trafficking protein family.

In terms of biological role, could be a mediator in iron transactions between iron acquisition and iron-requiring processes, such as synthesis and/or repair of Fe-S clusters in biosynthetic enzymes. The protein is Probable Fe(2+)-trafficking protein of Actinobacillus succinogenes (strain ATCC 55618 / DSM 22257 / CCUG 43843 / 130Z).